The sequence spans 167 residues: Photosystem I assembly protein Ycf3 (167 aa).

3 TPR repeats span residues 35–68 (AFSYYRDGMSAQSEGEYAEALANYYEALNLEEDP), 72–105 (SFILYNIGLIHASNGEYVKALDYYHKALEANNKL), and 120–153 (AVKASEINDLETAQALFHEAAQYWKQAIKLAPSN).

Belongs to the Ycf3 family.

It is found in the plastid. It localises to the chloroplast thylakoid membrane. Functionally, essential for the assembly of the photosystem I (PSI) complex. May act as a chaperone-like factor to guide the assembly of the PSI subunits. This is Photosystem I assembly protein Ycf3 from Galdieria sulphuraria (Red alga).